Consider the following 306-residue polypeptide: Glutaminase (306 aa).

Ser64, Asn115, Glu159, Asn166, Tyr190, Tyr242, and Val260 together coordinate substrate.

It belongs to the glutaminase family. As to quaternary structure, homotetramer.

The catalysed reaction is L-glutamine + H2O = L-glutamate + NH4(+). The polypeptide is Glutaminase (Vibrio cholerae serotype O1 (strain ATCC 39541 / Classical Ogawa 395 / O395)).